Here is a 234-residue protein sequence, read N- to C-terminus: PHD finger protein ING1 (234 aa).

A disordered region spans residues 129 to 166 (NNGKAGNAGEGGRGGRKKTRLATAASTAAASTGMTSSN). The segment covering 149-165 (LATAASTAAASTGMTSS) has biased composition (low complexity). Residues 178–227 (PTYCICNQVSFGEMVACDNNACKIEWFHFGCVGLKEQPKGKWYCPECATV) form a PHD-type zinc finger. The Zn(2+) site is built by Cys-181, Cys-183, Cys-194, Cys-199, His-205, Cys-208, Cys-221, and Cys-224.

It belongs to the ING family. In terms of assembly, interacts with H3K4me3 and to a lesser extent with H3K4me2. In terms of tissue distribution, ubiquitously expressed.

The protein resides in the nucleus. Functionally, histone-binding component that specifically recognizes H3 tails trimethylated on 'Lys-4' (H3K4me3), which mark transcription start sites of virtually all active genes. The polypeptide is PHD finger protein ING1 (ING1) (Arabidopsis thaliana (Mouse-ear cress)).